The sequence spans 227 residues: Glutathione S-transferase U17 (227 aa).

A GST N-terminal domain is found at 4 to 83 (SDVKLIGAWA…YIDDTWSSSG (80 aa)). Glutathione-binding positions include 14–15 (SP), 40–41 (SK), 54–55 (KI), and 67–68 (ES). Positions 90–222 (DPYDRAMARF…KLAEFAKKIF (133 aa)) constitute a GST C-terminal domain.

This sequence belongs to the GST superfamily. Tau family.

The protein localises to the cytoplasm. Its subcellular location is the cytosol. It catalyses the reaction RX + glutathione = an S-substituted glutathione + a halide anion + H(+). Functionally, involved in light signaling, mainly phyA-mediated photomorphogenesis and in the integration of various phytohormone signals to modulate various aspects of plant development by affecting glutathione pools. In vitro, possesses glutathione S-transferase activity toward 1-chloro-2,4-dinitrobenzene (CDNB) and benzyl isothiocyanate (BITC). The chain is Glutathione S-transferase U17 (GSTU17) from Arabidopsis thaliana (Mouse-ear cress).